Reading from the N-terminus, the 372-residue chain is Transaldolase (372 aa).

K140 functions as the Schiff-base intermediate with substrate in the catalytic mechanism.

Belongs to the transaldolase family. Type 2 subfamily.

It localises to the cytoplasm. The enzyme catalyses D-sedoheptulose 7-phosphate + D-glyceraldehyde 3-phosphate = D-erythrose 4-phosphate + beta-D-fructose 6-phosphate. The protein operates within carbohydrate degradation; pentose phosphate pathway; D-glyceraldehyde 3-phosphate and beta-D-fructose 6-phosphate from D-ribose 5-phosphate and D-xylulose 5-phosphate (non-oxidative stage): step 2/3. Functionally, transaldolase is important for the balance of metabolites in the pentose-phosphate pathway. The protein is Transaldolase of Acidothermus cellulolyticus (strain ATCC 43068 / DSM 8971 / 11B).